A 1413-amino-acid polypeptide reads, in one-letter code: DNA-directed RNA polymerase subunit beta' (1413 aa).

Zn(2+) contacts are provided by cysteine 70, cysteine 72, cysteine 85, and cysteine 88. The Mg(2+) site is built by aspartate 460, aspartate 462, and aspartate 464. Residues cysteine 819, cysteine 893, cysteine 900, and cysteine 903 each contribute to the Zn(2+) site.

The protein belongs to the RNA polymerase beta' chain family. The RNAP catalytic core consists of 2 alpha, 1 beta, 1 beta' and 1 omega subunit. When a sigma factor is associated with the core the holoenzyme is formed, which can initiate transcription. Requires Mg(2+) as cofactor. Zn(2+) serves as cofactor.

The catalysed reaction is RNA(n) + a ribonucleoside 5'-triphosphate = RNA(n+1) + diphosphate. DNA-dependent RNA polymerase catalyzes the transcription of DNA into RNA using the four ribonucleoside triphosphates as substrates. The chain is DNA-directed RNA polymerase subunit beta' from Burkholderia ambifaria (strain MC40-6).